The following is a 235-amino-acid chain: MARRPSTDDLRSGPERFMALVKTTVPPVHPAGLPFIGAGLALAAAGRRNRWVRGAGLVAAGANAAFFRHPPRVPPTRPGVVVAPADGLICLVEDAEPPAELNLPARPVPRVSIFLSIFDAHVQRIPISGEVVAVEHRPGLFGSAELAAASEDNERNSVVIRTDTGAQVIAVQIAGLVARRIVCDLTTGDKVTIGDTYGLIRYGSRLDTYLPEGTDIQVLPGQRAVGGETILAELP.

The Schiff-base intermediate with substrate; via pyruvic acid role is filled by Ser204. Pyruvic acid (Ser); by autocatalysis is present on Ser204.

Belongs to the phosphatidylserine decarboxylase family. PSD-A subfamily. In terms of assembly, heterodimer of a large membrane-associated beta subunit and a small pyruvoyl-containing alpha subunit. It depends on pyruvate as a cofactor. Post-translationally, is synthesized initially as an inactive proenzyme. Formation of the active enzyme involves a self-maturation process in which the active site pyruvoyl group is generated from an internal serine residue via an autocatalytic post-translational modification. Two non-identical subunits are generated from the proenzyme in this reaction, and the pyruvate is formed at the N-terminus of the alpha chain, which is derived from the carboxyl end of the proenzyme. The post-translation cleavage follows an unusual pathway, termed non-hydrolytic serinolysis, in which the side chain hydroxyl group of the serine supplies its oxygen atom to form the C-terminus of the beta chain, while the remainder of the serine residue undergoes an oxidative deamination to produce ammonia and the pyruvoyl prosthetic group on the alpha chain.

The protein localises to the cell membrane. It carries out the reaction a 1,2-diacyl-sn-glycero-3-phospho-L-serine + H(+) = a 1,2-diacyl-sn-glycero-3-phosphoethanolamine + CO2. It participates in phospholipid metabolism; phosphatidylethanolamine biosynthesis; phosphatidylethanolamine from CDP-diacylglycerol: step 2/2. Catalyzes the formation of phosphatidylethanolamine (PtdEtn) from phosphatidylserine (PtdSer). The polypeptide is Phosphatidylserine decarboxylase proenzyme (Mycobacterium sp. (strain KMS)).